Reading from the N-terminus, the 224-residue chain is Probable amino-acid permease protein YxeN (224 aa).

The next 6 helical transmembrane spans lie at 3–23 (TIDW…LPIT), 24–44 (LFMA…LALI), 58–78 (LYIS…IYYG), 91–111 (ALTA…AEIF), 157–177 (FIGL…EMFA), and 190–210 (FETY…YSIL). Residues 20 to 211 (LPITLFMAIA…VLTIIYSILQ (192 aa)) form the ABC transmembrane type-1 domain.

Belongs to the binding-protein-dependent transport system permease family. The complex is composed of two ATP-binding proteins (YxeO), two transmembrane proteins (YxeN) and a solute-binding protein (YxeM).

The protein localises to the cell membrane. Probably part of the ABC transporter complex YxeMNO that could be involved in amino-acid import. May transport S-methylcysteine. Probably responsible for the translocation of the substrate across the membrane. The sequence is that of Probable amino-acid permease protein YxeN (yxeN) from Bacillus subtilis (strain 168).